A 478-amino-acid chain; its full sequence is Proline--tRNA ligase (478 aa).

This sequence belongs to the class-II aminoacyl-tRNA synthetase family. ProS type 3 subfamily. As to quaternary structure, homodimer.

The protein resides in the cytoplasm. It catalyses the reaction tRNA(Pro) + L-proline + ATP = L-prolyl-tRNA(Pro) + AMP + diphosphate. Catalyzes the attachment of proline to tRNA(Pro) in a two-step reaction: proline is first activated by ATP to form Pro-AMP and then transferred to the acceptor end of tRNA(Pro). This Clostridium botulinum (strain Loch Maree / Type A3) protein is Proline--tRNA ligase.